A 231-amino-acid polypeptide reads, in one-letter code: Regulatory protein VanRc (231 aa).

Residues 4-117 (KIVVVDDEKE…EVVARVKTQL (114 aa)) form the Response regulatory domain. A 4-aspartylphosphate modification is found at aspartate 53. Positions 132–231 (VEEYEKDGLI…VWGVGYIIEK (100 aa)) form a DNA-binding region, ompR/PhoB-type.

Phosphorylated by VanSc.

The protein resides in the cytoplasm. In terms of biological role, member of the two-component regulatory system VanSc/VanRc. Binds to the promoter regions of target genes. Activates the transcription of vanC1 and vanXYC in response to vancomycin which results in vancomycin resistance. The polypeptide is Regulatory protein VanRc (Enterococcus gallinarum).